A 234-amino-acid chain; its full sequence is Protein SOP4 (234 aa).

The first 18 residues, 1 to 18 (MFSQIVLLLSAFIYVVSA), serve as a signal peptide directing secretion. Residues 19 to 188 (TARRGTIKGR…VGNILNSRWK (170 aa)) lie on the Lumenal side of the membrane. N-linked (GlcNAc...) asparagine glycans are attached at residues N35, N53, N85, N115, and N170. The helical transmembrane segment at 189 to 209 (LAGVITLIALVVFPIIVEKLD) threads the bilayer. Residues 210-234 (PETARAIREEAKRKQREKYAAVASK) are Cytoplasmic-facing.

This sequence belongs to the SOP4 family.

Its subcellular location is the endoplasmic reticulum membrane. Its function is as follows. Involved in the export of PMA1, possibly through the monitoring or assisting of PMA1 folding and acquisition of competence to enter vesicles. The protein is Protein SOP4 (SOP4) of Saccharomyces cerevisiae (strain YJM789) (Baker's yeast).